We begin with the raw amino-acid sequence, 162 residues long: Shikimate kinase (162 aa).

11–16 contacts ATP; that stretch reads GSGKSS. Serine 15 contributes to the Mg(2+) binding site. 3 residues coordinate substrate: aspartate 33, arginine 57, and glycine 80. Position 116 (arginine 116) interacts with ATP. Arginine 132 contributes to the substrate binding site.

It belongs to the shikimate kinase family. As to quaternary structure, monomer. Mg(2+) serves as cofactor.

Its subcellular location is the cytoplasm. It carries out the reaction shikimate + ATP = 3-phosphoshikimate + ADP + H(+). It participates in metabolic intermediate biosynthesis; chorismate biosynthesis; chorismate from D-erythrose 4-phosphate and phosphoenolpyruvate: step 5/7. Functionally, catalyzes the specific phosphorylation of the 3-hydroxyl group of shikimic acid using ATP as a cosubstrate. In Helicobacter pylori (strain G27), this protein is Shikimate kinase.